The primary structure comprises 302 residues: Nudix hydrolase 22, chloroplastic (302 aa).

A chloroplast-targeting transit peptide spans methionine 1–leucine 25. The 157-residue stretch at proline 73–threonine 229 folds into the Nudix hydrolase domain. The short motif at lysine 114 to glycine 135 is the Nudix box element. Glutamate 129 and glutamate 133 together coordinate Mg(2+).

The protein belongs to the Nudix hydrolase family. Mg(2+) is required as a cofactor. It depends on Mn(2+) as a cofactor. Expressed in roots, leaves, stems and inflorescences.

It is found in the plastid. It localises to the chloroplast. In terms of biological role, probably mediates the hydrolysis of some nucleoside diphosphate derivatives. This is Nudix hydrolase 22, chloroplastic (NUDT22) from Arabidopsis thaliana (Mouse-ear cress).